Here is a 219-residue protein sequence, read N- to C-terminus: Protein-L-isoaspartate O-methyltransferase 2 (219 aa).

S60 is a catalytic residue.

The protein belongs to the methyltransferase superfamily. L-isoaspartyl/D-aspartyl protein methyltransferase family.

It localises to the cytoplasm. It carries out the reaction [protein]-L-isoaspartate + S-adenosyl-L-methionine = [protein]-L-isoaspartate alpha-methyl ester + S-adenosyl-L-homocysteine. In terms of biological role, catalyzes the methyl esterification of L-isoaspartyl residues in peptides and proteins that result from spontaneous decomposition of normal L-aspartyl and L-asparaginyl residues. It plays a role in the repair and/or degradation of damaged proteins. The protein is Protein-L-isoaspartate O-methyltransferase 2 (pcm2) of Archaeoglobus fulgidus (strain ATCC 49558 / DSM 4304 / JCM 9628 / NBRC 100126 / VC-16).